We begin with the raw amino-acid sequence, 146 residues long: Hemoglobin cathodic subunit beta (146 aa).

The Globin domain occupies Gln2–Phe146. His63 is a heme b binding site.

Heterotetramer of two alpha and two beta chains. In terms of tissue distribution, red blood cells.

In terms of biological role, involved in oxygen transport from the gills to various peripheral tissues. The sequence is that of Hemoglobin cathodic subunit beta from Ophisurus serpens (Serpent eel).